We begin with the raw amino-acid sequence, 545 residues long: MAAKEVVFGNDARVKMLAGVNILANAVKVTLGPKGRNVVLEKSFGAPLITKDGVSVAKEIELEDKFENMGAQMVKEVASKANDAAGDGTTTATVLAQAIVNEGLKAVAAGMNPMDLKRGIDKAVAAAVVELKALSQECADSKAIAQVGTISANSDESIGDIIATAMEKVGKEGVITVEEGQALENELDVVEGMQFDRGYLSPYFINKPETGAVELDNPFVLLVDKKISNIRELLPILEGLAKTGKPLLIVAEDVEGEALATLVVNNMRGIVKVAAVKAPGFGDRRKAMLQDIAILTGGTVIAEEIGLELEKATLEDLGTAKRVVITKDNTTIIDGNGAEEQIKARVGQIKQQIEETTSDYDREKLQERMAKLAGGVAVIKVGAATEVEMKEKKARVEDALHATRAAVEEGVVPGGGVALVRVASKIANVDVANEDQKHGVVIALRAMEAPLRQIATNAGEEASVVANTVKNGSGNFGYNAGNDSYGDMLEMGILDPTKVTRSALQFAASVAGLMITTEAMVAELPKADAPDMGGMGGGMGGMGMM.

ATP-binding positions include 30–33 (TLGP), K51, 87–91 (DGTTT), G415, and D495.

The protein belongs to the chaperonin (HSP60) family. In terms of assembly, forms a cylinder of 14 subunits composed of two heptameric rings stacked back-to-back. Interacts with the co-chaperonin GroES.

It localises to the cytoplasm. It carries out the reaction ATP + H2O + a folded polypeptide = ADP + phosphate + an unfolded polypeptide.. Its function is as follows. Together with its co-chaperonin GroES, plays an essential role in assisting protein folding. The GroEL-GroES system forms a nano-cage that allows encapsulation of the non-native substrate proteins and provides a physical environment optimized to promote and accelerate protein folding. This chain is Chaperonin GroEL, found in Shewanella amazonensis (strain ATCC BAA-1098 / SB2B).